The sequence spans 380 residues: uncharacterized protein (380 aa).

Disordered stretches follow at residues 278–323 (AATI…PRVA) and 345–368 (SLPGRESTPSDDGGSLHPSGRPRR). The segment covering 301–319 (RNGPRRPARRGTSRGRRCA) has biased composition (basic residues).

This is an uncharacterized protein from Mycobacterium tuberculosis (strain CDC 1551 / Oshkosh).